A 480-amino-acid chain; its full sequence is Caspase-8 (480 aa).

Residues 1-218 (MDFQSCLYAI…ELCDSPREQD (218 aa)) constitute a propeptide that is removed on maturation. 2 consecutive DED domains span residues 3 to 80 (FQSC…NFLD) and 101 to 177 (YRVM…KIED). Serine 188 and serine 213 each carry phosphoserine. Position 226 is an N6-acetyllysine (lysine 226). Histidine 319 is a catalytic residue. Tyrosine 336 is modified (phosphotyrosine). Residue cysteine 362 is part of the active site. A propeptide spanning residues 377 to 387 (FEQQNHTLEVD) is cleaved from the precursor. Serine 389 bears the Phosphoserine; by CDK1 mark.

The protein belongs to the peptidase C14A family. In terms of assembly, heterotetramer that consists of two anti-parallel arranged heterodimers, each one formed by a 18 kDa (p18) and a 10 kDa (p10) subunit. Component of the death-induced signaling complex (DISC) composed of cell surface receptor FAS/CD95 or TNFRSF1A, adapter protein FADD and the CASP8 protease; recruitment of CASP8 to the complex is required for processing of CASP8 into the p18 and p10 subunits. Component of the AIM2 PANoptosome complex, a multiprotein complex that drives inflammatory cell death (PANoptosis). Interacts with CFLAR and PEA15. Interacts with RFFL and RNF34; negatively regulate CASP8 through proteasomal degradation. Interacts with TNFAIP8L2. Interacts with CASP8AP2. Interacts with NOL3; decreases CASP8 activity in a mitochondria localization- and phosphorylation-dependent manner and this interaction is dissociated by calcium. Interacts with UBR2. Interacts with RIPK1. Interacts with stimulated TNFRSF10B; this interaction is followed by CASP8 proteolytic cleavage and activation. Generation of the subunits requires association with the death-inducing signaling complex (DISC), whereas additional processing is likely due to the autocatalytic activity of the activated protease. GZMB and CASP10 can be involved in these processing events. In terms of processing, (Microbial infection) Proteolytically cleaved by the cowpox virus CRMA death inhibitory protein. Post-translationally, phosphorylation on Ser-389 during mitosis by CDK1 inhibits activation by proteolysis and prevents apoptosis. This phosphorylation occurs in cancer cell lines, as well as in primary breast tissues and lymphocytes. Expressed in a wide variety of tissues. Highest expression in spleen, thymus, lung, liver and kidney. Lower expression in heart, brain, testis and skeletal muscle.

The protein localises to the cytoplasm. It localises to the nucleus. It carries out the reaction Strict requirement for Asp at position P1 and has a preferred cleavage sequence of (Leu/Asp/Val)-Glu-Thr-Asp-|-(Gly/Ser/Ala).. With respect to regulation, CASP8 activity is restricted by RIPK1. Its activity is regulated as follows. (Microbial infection) Inhibited by baculovirus p35 protein P35. Its function is as follows. Thiol protease that plays a key role in programmed cell death by acting as a molecular switch for apoptosis, necroptosis and pyroptosis, and is required to prevent tissue damage during embryonic development and adulthood. Initiator protease that induces extrinsic apoptosis by mediating cleavage and activation of effector caspases responsible for FAS/CD95-mediated and TNFRSF1A-induced cell death. Cleaves and activates effector caspases CASP3, CASP4, CASP6, CASP7, CASP9 and CASP10. Binding to the adapter molecule FADD recruits it to either receptor FAS/CD95 or TNFRSF1A. The resulting aggregate called the death-inducing signaling complex (DISC) performs CASP8 proteolytic activation. The active dimeric enzyme is then liberated from the DISC and free to activate downstream apoptotic proteases. Proteolytic fragments of the N-terminal propeptide (termed CAP3, CAP5 and CAP6) are likely retained in the DISC. In addition to extrinsic apoptosis, also acts as a negative regulator of necroptosis: acts by cleaving RIPK1 at 'Asp-325', which is crucial to inhibit RIPK1 kinase activity, limiting TNF-induced apoptosis, necroptosis and inflammatory response. Also able to initiate pyroptosis by mediating cleavage and activation of gasdermin-C and -D (GSDMC and GSDMD, respectively): gasdermin cleavage promotes release of the N-terminal moiety that binds to membranes and forms pores, triggering pyroptosis. Initiates pyroptosis following inactivation of MAP3K7/TAK1. Also acts as a regulator of innate immunity by mediating cleavage and inactivation of N4BP1 downstream of TLR3 or TLR4, thereby promoting cytokine production. May participate in the Granzyme B (GZMB) cell death pathways. Cleaves PARP1 and PARP2. In Mus musculus (Mouse), this protein is Caspase-8.